A 318-amino-acid chain; its full sequence is Acetyl-coenzyme A carboxylase carboxyl transferase subunit alpha (318 aa).

One can recognise a CoA carboxyltransferase C-terminal domain in the interval 39–292 (LSDKAERQLR…GAAIAETLPG (254 aa)).

Belongs to the AccA family. In terms of assembly, acetyl-CoA carboxylase is a heterohexamer composed of biotin carboxyl carrier protein (AccB), biotin carboxylase (AccC) and two subunits each of ACCase subunit alpha (AccA) and ACCase subunit beta (AccD).

It is found in the cytoplasm. It catalyses the reaction N(6)-carboxybiotinyl-L-lysyl-[protein] + acetyl-CoA = N(6)-biotinyl-L-lysyl-[protein] + malonyl-CoA. It functions in the pathway lipid metabolism; malonyl-CoA biosynthesis; malonyl-CoA from acetyl-CoA: step 1/1. Component of the acetyl coenzyme A carboxylase (ACC) complex. First, biotin carboxylase catalyzes the carboxylation of biotin on its carrier protein (BCCP) and then the CO(2) group is transferred by the carboxyltransferase to acetyl-CoA to form malonyl-CoA. This chain is Acetyl-coenzyme A carboxylase carboxyl transferase subunit alpha, found in Acidiphilium cryptum (strain JF-5).